The chain runs to 319 residues: Ribose-phosphate pyrophosphokinase (319 aa).

Residues 41–43 and 100–101 contribute to the ATP site; these read DGE and RQ. Mg(2+) contacts are provided by H134 and D176. Residue K199 is part of the active site. Residues R201, D225, and 229–233 each bind D-ribose 5-phosphate; that span reads DTAGT.

Belongs to the ribose-phosphate pyrophosphokinase family. Class I subfamily. In terms of assembly, homohexamer. It depends on Mg(2+) as a cofactor.

It localises to the cytoplasm. It catalyses the reaction D-ribose 5-phosphate + ATP = 5-phospho-alpha-D-ribose 1-diphosphate + AMP + H(+). It participates in metabolic intermediate biosynthesis; 5-phospho-alpha-D-ribose 1-diphosphate biosynthesis; 5-phospho-alpha-D-ribose 1-diphosphate from D-ribose 5-phosphate (route I): step 1/1. Involved in the biosynthesis of the central metabolite phospho-alpha-D-ribosyl-1-pyrophosphate (PRPP) via the transfer of pyrophosphoryl group from ATP to 1-hydroxyl of ribose-5-phosphate (Rib-5-P). In Clostridium perfringens (strain 13 / Type A), this protein is Ribose-phosphate pyrophosphokinase.